A 312-amino-acid chain; its full sequence is Beta-ketoacyl-[acyl-carrier-protein] synthase III 1 (312 aa).

Active-site residues include Cys113 and His237. The segment at 238-242 (QANIR) is ACP-binding. Residue Asn267 is part of the active site.

The protein belongs to the thiolase-like superfamily. FabH family. In terms of assembly, homodimer.

The protein resides in the cytoplasm. The catalysed reaction is malonyl-[ACP] + acetyl-CoA + H(+) = 3-oxobutanoyl-[ACP] + CO2 + CoA. Its pathway is lipid metabolism; fatty acid biosynthesis. In terms of biological role, catalyzes the condensation reaction of fatty acid synthesis by the addition to an acyl acceptor of two carbons from malonyl-ACP. Catalyzes the first condensation reaction which initiates fatty acid synthesis and may therefore play a role in governing the total rate of fatty acid production. Possesses both acetoacetyl-ACP synthase and acetyl transacylase activities. Its substrate specificity determines the biosynthesis of branched-chain and/or straight-chain of fatty acids. This chain is Beta-ketoacyl-[acyl-carrier-protein] synthase III 1, found in Halalkalibacterium halodurans (strain ATCC BAA-125 / DSM 18197 / FERM 7344 / JCM 9153 / C-125) (Bacillus halodurans).